Here is a 279-residue protein sequence, read N- to C-terminus: Fatty acid elongase 2 (279 aa).

The next 7 membrane-spanning stretches (helical) occupy residues 16-36 (LMLE…ALVW), 61-81 (AIIV…IVVV), 112-132 (FWIG…MFLL), 138-158 (PPFL…HTYC), 164-184 (MVLF…YFAM), 196-216 (FAPF…LVTT), and 242-262 (MGVI…LNSY). Residues 142 to 146 (HWYHH) carry the HxxHH motif motif. Residue H145 is the Nucleophile of the active site.

Belongs to the ELO family.

It is found in the endoplasmic reticulum membrane. It catalyses the reaction an acyl-CoA + malonyl-CoA + H(+) = a 3-oxoacyl-CoA + CO2 + CoA. Its pathway is lipid metabolism; fatty acid biosynthesis. In terms of biological role, involved in the synthesis of fatty acids. Elongates C10 fatty acids to C14. Required for the maintenance of the global lipidome profile in this parasite. The chain is Fatty acid elongase 2 from Trypanosoma cruzi (strain CL Brener).